The chain runs to 184 residues: Inorganic pyrophosphatase (184 aa).

Residues lysine 19, arginine 33, and tyrosine 45 each coordinate substrate. The Mg(2+) site is built by aspartate 55, aspartate 60, and aspartate 92. A substrate-binding site is contributed by tyrosine 129.

The protein belongs to the PPase family. In terms of assembly, homohexamer. Mg(2+) is required as a cofactor.

Its subcellular location is the cytoplasm. The catalysed reaction is diphosphate + H2O = 2 phosphate + H(+). Catalyzes the hydrolysis of inorganic pyrophosphate (PPi) forming two phosphate ions. The sequence is that of Inorganic pyrophosphatase from Mycoplasma pneumoniae (strain ATCC 29342 / M129 / Subtype 1) (Mycoplasmoides pneumoniae).